The following is a 354-amino-acid chain: B-cell differentiation antigen CD72 (354 aa).

At 1 to 95 (MADAITYADL…PRCPTVCLQY (95 aa)) the chain is on the cytoplasmic side. Phosphotyrosine; by LYN is present on residues Tyr-7 and Tyr-39. The helical; Signal-anchor for type II membrane protein transmembrane segment at 96-116 (FLLGLLVSCLMLGVAVICLGV) threads the bilayer. Over 117–354 (RYLQVSRQFQ…FRFPDGINLN (238 aa)) the chain is Extracellular. Asn-136 is a glycosylation site (N-linked (GlcNAc...) asparagine). The C-type lectin domain maps to 231–342 (CCPCGWIPYQ…AELHPCICES (112 aa)). Disulfide bonds link Cys-232/Cys-243, Cys-260/Cys-340, and Cys-315/Cys-332.

Homodimer; disulfide-linked. Associates with CD5. Interacts (tyrosine phosphorylated) with PTPN6/SHP-1. Post-translationally, phosphorylated upon engagement of the B-cell receptor, probably by LYN or SYK. Phosphorylation at Tyr-7 is important for interaction with PTPN6/SHP-1. As to expression, pre-B-cells and B-cells but not terminally differentiated plasma cells.

The protein localises to the membrane. Co-receptor of B cell receptor (BCR) that plays both positive and negative roles on B-cell functions. Recognizes the Sm/ribonucleoprotein (RNP) self-antigen ligand, and coligation of CD72 and BCR inhibits BCR signaling. Mechanistically, ligand binding leads to the recruitment of PTPN6/SHP-1 to the BCR complex which is inhibitory to BCR signaling. Acts also as a ligand for CD5 and thereby plays a critical role in maintaining regulatory T and B-cell homeostasis. The sequence is that of B-cell differentiation antigen CD72 (Cd72) from Mus musculus (Mouse).